Consider the following 142-residue polypeptide: Ribosome-binding factor A (142 aa).

It belongs to the RbfA family. As to quaternary structure, monomer. Binds 30S ribosomal subunits, but not 50S ribosomal subunits or 70S ribosomes.

It localises to the cytoplasm. One of several proteins that assist in the late maturation steps of the functional core of the 30S ribosomal subunit. Associates with free 30S ribosomal subunits (but not with 30S subunits that are part of 70S ribosomes or polysomes). Required for efficient processing of 16S rRNA. May interact with the 5'-terminal helix region of 16S rRNA. This Leifsonia xyli subsp. xyli (strain CTCB07) protein is Ribosome-binding factor A.